The primary structure comprises 283 residues: 3-methyl-2-oxobutanoate hydroxymethyltransferase (283 aa).

Residues D46 and D85 each contribute to the Mg(2+) site. Residues 46-47, D85, and K115 each bind 3-methyl-2-oxobutanoate; that span reads DS. Residue E117 participates in Mg(2+) binding. The Proton acceptor role is filled by E184.

The protein belongs to the PanB family. As to quaternary structure, homodecamer; pentamer of dimers. Mg(2+) serves as cofactor.

It is found in the cytoplasm. It catalyses the reaction 3-methyl-2-oxobutanoate + (6R)-5,10-methylene-5,6,7,8-tetrahydrofolate + H2O = 2-dehydropantoate + (6S)-5,6,7,8-tetrahydrofolate. It participates in cofactor biosynthesis; (R)-pantothenate biosynthesis; (R)-pantoate from 3-methyl-2-oxobutanoate: step 1/2. Functionally, catalyzes the reversible reaction in which hydroxymethyl group from 5,10-methylenetetrahydrofolate is transferred onto alpha-ketoisovalerate to form ketopantoate. The protein is 3-methyl-2-oxobutanoate hydroxymethyltransferase of Acetivibrio thermocellus (strain ATCC 27405 / DSM 1237 / JCM 9322 / NBRC 103400 / NCIMB 10682 / NRRL B-4536 / VPI 7372) (Clostridium thermocellum).